Here is a 503-residue protein sequence, read N- to C-terminus: Maturase K (503 aa).

This sequence belongs to the intron maturase 2 family. MatK subfamily.

Its subcellular location is the plastid. It is found in the chloroplast. Its function is as follows. Usually encoded in the trnK tRNA gene intron. Probably assists in splicing its own and other chloroplast group II introns. In Cercocarpus betuloides (Mountain mahogany), this protein is Maturase K.